The primary structure comprises 143 residues: Large ribosomal subunit protein uL13 (143 aa).

The protein belongs to the universal ribosomal protein uL13 family. In terms of assembly, part of the 50S ribosomal subunit.

Functionally, this protein is one of the early assembly proteins of the 50S ribosomal subunit, although it is not seen to bind rRNA by itself. It is important during the early stages of 50S assembly. The sequence is that of Large ribosomal subunit protein uL13 from Albidiferax ferrireducens (strain ATCC BAA-621 / DSM 15236 / T118) (Rhodoferax ferrireducens).